A 447-amino-acid polypeptide reads, in one-letter code: 3-phosphoshikimate 1-carboxyvinyltransferase (447 aa).

The disordered stretch occupies residues 1–22 (MTPSLKRLSGAMRARPAPALSG). 3-phosphoshikimate is bound by residues lysine 30, serine 31, and arginine 35. Lysine 30 contributes to the phosphoenolpyruvate binding site. Glycine 102 and arginine 130 together coordinate phosphoenolpyruvate. Residues serine 173, glutamine 175, aspartate 325, and lysine 352 each contribute to the 3-phosphoshikimate site. Phosphoenolpyruvate is bound at residue glutamine 175. Aspartate 325 functions as the Proton acceptor in the catalytic mechanism. Residues arginine 356 and arginine 401 each contribute to the phosphoenolpyruvate site.

Belongs to the EPSP synthase family. As to quaternary structure, monomer.

Its subcellular location is the cytoplasm. The enzyme catalyses 3-phosphoshikimate + phosphoenolpyruvate = 5-O-(1-carboxyvinyl)-3-phosphoshikimate + phosphate. It participates in metabolic intermediate biosynthesis; chorismate biosynthesis; chorismate from D-erythrose 4-phosphate and phosphoenolpyruvate: step 6/7. Its function is as follows. Catalyzes the transfer of the enolpyruvyl moiety of phosphoenolpyruvate (PEP) to the 5-hydroxyl of shikimate-3-phosphate (S3P) to produce enolpyruvyl shikimate-3-phosphate and inorganic phosphate. The polypeptide is 3-phosphoshikimate 1-carboxyvinyltransferase (Maricaulis maris (strain MCS10) (Caulobacter maris)).